The sequence spans 173 residues: Ribosome maturation factor RimM (173 aa).

The PRC barrel domain maps to 95–169; it reads DPDEFYDHQL…VIEIDPPEGL (75 aa).

It belongs to the RimM family. Binds ribosomal protein uS19.

The protein localises to the cytoplasm. Its function is as follows. An accessory protein needed during the final step in the assembly of 30S ribosomal subunit, possibly for assembly of the head region. Essential for efficient processing of 16S rRNA. May be needed both before and after RbfA during the maturation of 16S rRNA. It has affinity for free ribosomal 30S subunits but not for 70S ribosomes. This is Ribosome maturation factor RimM from Mycobacteroides abscessus (strain ATCC 19977 / DSM 44196 / CCUG 20993 / CIP 104536 / JCM 13569 / NCTC 13031 / TMC 1543 / L948) (Mycobacterium abscessus).